We begin with the raw amino-acid sequence, 205 residues long: Gap junction epsilon-1 protein (205 aa).

At 1–22 (MSLNYIKNFYEGCVKPPTVIGQ) the chain is on the cytoplasmic side. A helical transmembrane segment spans residues 23-43 (FHTLFFGSVRMFFLGVLGFAV). Residues 44–74 (YGNEALHFSCDPDKREINLFCYNQFRPITPQ) lie on the Extracellular side of the membrane. Disulfide bonds link cysteine 53–cysteine 161 and cysteine 64–cysteine 147. The chain crosses the membrane as a helical span at residues 75 to 95 (VFWALQLVIVLLPGAIFHLYA). Topologically, residues 96–111 (ACKSINQDCILQKPVY) are cytoplasmic. The helical transmembrane segment at 112–132 (TVIYVLSVLLRISLEVFAFWL) threads the bilayer. Over 133-170 (QIHLFGFQVKPIYLCDTESLGKKPNILKCMVPEHFEKT) the chain is Extracellular. The helical transmembrane segment at 171–191 (IFLIAMYTFTVITMVLCVAEV) threads the bilayer. Residues 192-205 (FEIIFRRSCFLFKR) are Cytoplasmic-facing.

The protein belongs to the connexin family. Beta-type (group I) subfamily. In terms of assembly, a connexon is composed of a hexamer of connexins. Highly expressed in lens, where it is mainly found in lens fibers and to a lesser extent in lens epithelium. Weakly expressed in retina. Not detected in other tissues tested.

The protein resides in the cell membrane. Its function is as follows. Mediates calcium-independent ATP release, suggesting activity as a hemichannel. Does not form functional gap junctions. May play a non-essential role in eye lens development. This chain is Gap junction epsilon-1 protein, found in Mus musculus (Mouse).